A 404-amino-acid chain; its full sequence is MPYVDRQNRICGFLDIEENENSGKFLRRYFILDTREDSFVWYMDNPQNLPSGSSRVGAIKLTYISKVSDATKLRPKAEFCFVMNAGMRKYFLQANDQQDLVEWVNVLNKAIKITVPKQSDSQPNSDNLSRHGECGKKQVSYRTDIVGGVPIITPTQKEEVNECGESIDRNNLKRSQSHLPYFTPKPPQDSAVIKAGYCVKQGAVMKNWKRRYFQLDENTIGYFKSELEKEPLRVIPLKEVHKVQECKQSDIMMRDNLFEIVTTSRTFYVQADSPEEMHSWIKAVSGAIVAQRGPGRSASSEHPPGPSESKHAFRPTNAATATSHSTASRSNSLVSTFTMEKRGFYESLAKVKPGNFKVQTVSPREPASKVTEQALLRPQSKNGPQEKDCDLVDLDDASLPVSDV.

2 PH domains span residues 7–112 and 191–289; these read QNRI…KAIK and AVIK…GAIV. Disordered regions lie at residues 291-332 and 355-404; these read QRGP…RSNS and NFKV…VSDV. A compositionally biased stretch (low complexity) spans 316–332; sequence TNAATATSHSTASRSNS. Phosphoserine occurs at positions 332 and 362.

Interacts with MPDZ and PTPN13. Highly expressed in skeletal muscle, thymus, pancreas, placenta and lung. Detected at low levels in brain, heart, peripheral blood leukocytes, testis, ovary, spinal cord, thyroid, kidney, liver, small intestine and colon.

It localises to the cytoplasm. The protein localises to the cell membrane. Its subcellular location is the nucleus. Binds specifically to phosphatidylinositol 3,4-diphosphate (PtdIns3,4P2), but not to other phosphoinositides. May recruit other proteins to the plasma membrane. The polypeptide is Pleckstrin homology domain-containing family A member 1 (PLEKHA1) (Homo sapiens (Human)).